Here is a 68-residue protein sequence, read N- to C-terminus: Medusin-DA1 (68 aa).

A signal peptide spans 1–22 (MAFLKKSLFLVLFLGLVSLSVC). The propeptide occupies 23-48 (EEEKRENEEEKNEQEEDDREERNEEK). The interval 25–47 (EKRENEEEKNEQEEDDREERNEE) is disordered. Positions 31-41 (EEKNEQEEDDR) are enriched in acidic residues. L67 carries the leucine amide modification.

The protein belongs to the frog skin active peptide (FSAP) family. Medusin subfamily. In terms of tissue distribution, expressed by the skin glands.

The protein localises to the secreted. In terms of biological role, antimicrobial peptide with activity against Gram-positive bacteria (S.aureus, MIC=32 mg/L) and fungi (C.albicans, MIC=64 mg/L). Shows weak hemolytic activity. This chain is Medusin-DA1, found in Agalychnis dacnicolor (Giant Mexican leaf frog).